Reading from the N-terminus, the 97-residue chain is Serine protease inhibitor Kazal-type 8 (97 aa).

Residues 1–21 (MKGICSDAILVLATSMWMAFA) form the signal peptide. The Kazal-like domain occupies 36–96 (DKTIVECLKN…TKLYDGQCEN (61 aa)). 3 disulfide bridges follow: Cys42-Cys76, Cys49-Cys73, and Cys62-Cys94. A glycan (N-linked (GlcNAc...) asparagine) is linked at Asn85.

Its subcellular location is the secreted. Functionally, probable serine protease inhibitor. In Homo sapiens (Human), this protein is Serine protease inhibitor Kazal-type 8 (SPINK8).